A 276-amino-acid polypeptide reads, in one-letter code: Dermonecrotic toxin LlSicTox-alphaIV2i (276 aa).

Residue His-5 is part of the active site. Residues Glu-25 and Asp-27 each coordinate Mg(2+). Catalysis depends on His-41, which acts as the Nucleophile. Intrachain disulfides connect Cys-45–Cys-51 and Cys-47–Cys-193. Asp-85 contacts Mg(2+).

This sequence belongs to the arthropod phospholipase D family. Class II subfamily. Mg(2+) is required as a cofactor. In terms of tissue distribution, expressed by the venom gland.

The protein localises to the secreted. The enzyme catalyses an N-(acyl)-sphingosylphosphocholine = an N-(acyl)-sphingosyl-1,3-cyclic phosphate + choline. It carries out the reaction an N-(acyl)-sphingosylphosphoethanolamine = an N-(acyl)-sphingosyl-1,3-cyclic phosphate + ethanolamine. The catalysed reaction is a 1-acyl-sn-glycero-3-phosphocholine = a 1-acyl-sn-glycero-2,3-cyclic phosphate + choline. It catalyses the reaction a 1-acyl-sn-glycero-3-phosphoethanolamine = a 1-acyl-sn-glycero-2,3-cyclic phosphate + ethanolamine. Dermonecrotic toxins cleave the phosphodiester linkage between the phosphate and headgroup of certain phospholipids (sphingolipid and lysolipid substrates), forming an alcohol (often choline) and a cyclic phosphate. This toxin acts on sphingomyelin (SM). It may also act on ceramide phosphoethanolamine (CPE), lysophosphatidylcholine (LPC) and lysophosphatidylethanolamine (LPE), but not on lysophosphatidylserine (LPS), and lysophosphatidylglycerol (LPG). It acts by transphosphatidylation, releasing exclusively cyclic phosphate products as second products. Induces dermonecrosis, hemolysis, increased vascular permeability, edema, inflammatory response, and platelet aggregation. In Loxosceles laeta (South American recluse spider), this protein is Dermonecrotic toxin LlSicTox-alphaIV2i.